We begin with the raw amino-acid sequence, 81 residues long: Cytotoxin 5b (81 aa).

A signal peptide spans 1–21 (MKTLLLTLLVVTIVCLDLGYT). Disulfide bonds link C24-C42, C35-C59, C63-C74, and C75-C80.

This sequence belongs to the three-finger toxin family. Short-chain subfamily. Type IA cytotoxin sub-subfamily. As to quaternary structure, monomer in solution; Homodimer and oligomer in the presence of negatively charged lipids forming a pore with a size ranging between 20 and 30 Angstroms. Expressed by the venom gland.

It is found in the secreted. The protein resides in the target cell membrane. Functionally, shows cytolytic activity on many different cells by forming pore in lipid membranes. In vivo, increases heart rate or kills the animal by cardiac arrest. In addition, it binds to heparin with high affinity, interacts with Kv channel-interacting protein 1 (KCNIP1) in a calcium-independent manner, and binds to integrin alpha-V/beta-3 (ITGAV/ITGB3) with moderate affinity. This chain is Cytotoxin 5b, found in Naja sputatrix (Malayan spitting cobra).